Reading from the N-terminus, the 1362-residue chain is Bromodomain-containing protein 4 (1362 aa).

The segment at 1 to 58 (MSAESGPGTRLRNLPVMGDGLETSQMSTTQAQAQPQPANAASTNPPPPETSNPNKPKR) is disordered. Residues 23–43 (TSQMSTTQAQAQPQPANAAST) are compositionally biased toward low complexity. The region spanning 58–164 (RQTNQLQYLL…KLFLQKINEL (107 aa)) is the Bromo 1 domain. Residue K99 forms a Glycyl lysine isopeptide (Lys-Gly) (interchain with G-Cter in SUMO2) linkage. Disordered regions lie at residues 174–229 (VQAK…PAVT), 242–352 (VPPQ…KVSE), and 463–615 (EPVV…YEEK). The segment covering 197–211 (PNTTQASTPPQTQTP) has biased composition (low complexity). Pro residues-rich tracts occupy residues 212–227 (QPNP…PFPA) and 243–266 (PPQP…PAPQ). Residues 320–336 (QRRESSRPVKPPKKDVP) show a composition bias toward basic and acidic residues. In terms of domain architecture, Bromo 2 spans 348–457 (SKVSEQLKCC…DVFEMRFAKM (110 aa)). S470 bears the Phosphoserine mark. Residues 478–497 (KVVAPPSSSDSSSDSSSDSD) are compositionally biased toward low complexity. Phosphoserine; by CK2 occurs at positions 484, 488, 492, 494, 498, 499, and 503. Positions 484–503 (SSSDSSSDSSSDSDSSTDDS) are NPS region. Residues 524–579 (QLAALSQPQQNKPKKKEKDKKEKKKEKHKRKEEVEENKKSKAKEPPPKKTKKNNSS) form a BID region region. Over residues 535-553 (KPKKKEKDKKEKKKEKHKR) the composition is skewed to basic residues. The segment covering 554–570 (KEEVEENKKSKAKEPPP) has biased composition (basic and acidic residues). A Glycyl lysine isopeptide (Lys-Gly) (interchain with G-Cter in SUMO2) cross-link involves residue K585. The NET domain maps to 600–682 (ESEEEDKCKP…SCLRKKRKPQ (83 aa)). S601 is modified (phosphoserine). Basic and acidic residues predominate over residues 605-615 (DKCKPMSYEEK). Glycyl lysine isopeptide (Lys-Gly) (interchain with G-Cter in SUMO2) cross-links involve residues K645 and K694. The interval 674 to 1100 (CLRKKRKPQA…PKKQELRAAS (427 aa)) is disordered. Residues 699-712 (SSSESESSSESSSS) are compositionally biased toward low complexity. The span at 724 to 744 (KSKKKGHPGREQKKHHHHHHQ) shows a compositional bias: basic residues. Pro residues-rich tracts occupy residues 751–785 (APVP…PPSM), 833–846 (PELP…PEHS), and 881–890 (PPKPARPPAV). A compositionally biased stretch (low complexity) spans 926-936 (MQMQLYLQQLQ). 3 stretches are compositionally biased toward pro residues: residues 953-964 (QPPPPLPPPPHP), 973-996 (QPPP…PPRP), and 1010-1034 (QPPP…PQPA). Basic residues predominate over residues 1041 to 1050 (QHHHSPRHHK). Positions 1047–1362 (RHHKSDPYST…LLSIFEENLF (316 aa)) are C-terminal (CTD) region. K1050 participates in a covalent cross-link: Glycyl lysine isopeptide (Lys-Gly) (interchain with G-Cter in SUMO2). Residues 1071 to 1091 (PQMSQFQSLTHQSPPQQNVQP) show a composition bias toward polar residues. N6-acetyllysine; alternate is present on K1111. Residue K1111 forms a Glycyl lysine isopeptide (Lys-Gly) (interchain with G-Cter in SUMO1); alternate linkage. Residue K1111 forms a Glycyl lysine isopeptide (Lys-Gly) (interchain with G-Cter in SUMO2); alternate linkage. Residues 1116–1339 (HSPIIRSEPF…KREQERRRRE (224 aa)) are disordered. S1117 and S1126 each carry phosphoserine. The span at 1175–1196 (PDKDKQKQEPKTPVAPKKDLKI) shows a compositional bias: basic and acidic residues. K1197 is covalently cross-linked (Glycyl lysine isopeptide (Lys-Gly) (interchain with G-Cter in SUMO2)). S1201 and S1204 each carry phosphoserine. Low complexity predominate over residues 1211 to 1223 (TTPSSTAKSSSDS). The segment covering 1225 to 1284 (EQFRRAAREKEEREKALKAQAEHAEKEKERLRQERMRSREDEDALEQARRAHEEARRRQE) has biased composition (basic and acidic residues). The span at 1285-1313 (QQQQQRQEQQQQQQQQAAAVAAAATPQAQ) shows a compositional bias: low complexity. Positions 1323–1339 (QQRELARKREQERRRRE) are enriched in basic and acidic residues.

The protein belongs to the BET family. In terms of assembly, interacts with p53/TP53; the interaction is direct. Interacts (via CTD region) with CDK9 and CCNT1, acting as an associated component of P-TEFb complex. Interacts with RELA (when acetylated at 'Lys-310'). Interacts (via NET domain) with NSD3, CHD4, BICRA and ATAD5. The interaction with BICRA bridges BRD4 to the GBAF complex. Interacts (via NET domain) with JMJD6 (via JmjC and N-terminal domains); the interaction is stronger in presence of ssRNA and recruits JMJD6 on distal enhancers. Interacts with NSD3. Interacts with NIPBL. Interacts with SMC2. Interacts with NCAPD3. As to quaternary structure, (Microbial infection) Interacts with bovine papillomavirus type 1 regulatory protein E2. This interactions may serve for the tethering of viral genomes to host mitotic chromosomes allowing successful partitioning of the viral genome during cell division. In terms of assembly, (Microbial infection) Interacts with Epstein-Barr virus (EBV) protein EBNA1; this interaction facilitates transcriptional activation by EBNA1. (Microbial infection) Interacts with human herpes virus-8 (HHV-8) protein LANA. Post-translationally, phosphorylation by CK2 disrupt the intramolecular binding between the bromo domain 2 and the NPS region and promotes binding between the NPS and the BID regions, leading to activate the protein and promote binding to acetylated histones. In absence of phosphorylation, BRD4 does not localize to p53/TP53 target gene promoters, phosphorylation promoting recruitment to p53/TP53 target promoters. Ubiquitously expressed.

It is found in the nucleus. The protein localises to the chromosome. Inhibited by JQ1, a thieno-triazolo-1,4-diazepine derivative, which specifically inhibits members of the BET family (BRD2, BRD3 and BRD4). The first bromo domain is inhibited by GSK778 (iBET-BD1), which specifically inhibits the first bromo domain of members of the BET family (BRD2, BRD3 and BRD4). The second bromo domain is inhibited by ABBV-744, which specifically inhibits the second bromo domain of members of the BET family (BRD2, BRD3 and BRD4). The second bromo domain is inhibited by GSK046 (iBET-BD2), which specifically inhibits the second bromo domain of members of the BET family (BRD2, BRD3 and BRD4). In terms of biological role, chromatin reader protein that recognizes and binds acetylated histones and plays a key role in transmission of epigenetic memory across cell divisions and transcription regulation. Remains associated with acetylated chromatin throughout the entire cell cycle and provides epigenetic memory for postmitotic G1 gene transcription by preserving acetylated chromatin status and maintaining high-order chromatin structure. During interphase, plays a key role in regulating the transcription of signal-inducible genes by associating with the P-TEFb complex and recruiting it to promoters. Also recruits P-TEFb complex to distal enhancers, so called anti-pause enhancers in collaboration with JMJD6. BRD4 and JMJD6 are required to form the transcriptionally active P-TEFb complex by displacing negative regulators such as HEXIM1 and 7SKsnRNA complex from P-TEFb, thereby transforming it into an active form that can then phosphorylate the C-terminal domain (CTD) of RNA polymerase II. Regulates differentiation of naive CD4(+) T-cells into T-helper Th17 by promoting recruitment of P-TEFb to promoters. Promotes phosphorylation of 'Ser-2' of the C-terminal domain (CTD) of RNA polymerase II. According to a report, directly acts as an atypical protein kinase and mediates phosphorylation of 'Ser-2' of the C-terminal domain (CTD) of RNA polymerase II; these data however need additional evidences in vivo. In addition to acetylated histones, also recognizes and binds acetylated RELA, leading to further recruitment of the P-TEFb complex and subsequent activation of NF-kappa-B. Also acts as a regulator of p53/TP53-mediated transcription: following phosphorylation by CK2, recruited to p53/TP53 specific target promoters. Functionally, acts as a chromatin insulator in the DNA damage response pathway. Inhibits DNA damage response signaling by recruiting the condensin-2 complex to acetylated histones, leading to chromatin structure remodeling, insulating the region from DNA damage response by limiting spreading of histone H2AX/H2A.x phosphorylation. The chain is Bromodomain-containing protein 4 (BRD4) from Homo sapiens (Human).